A 369-amino-acid chain; its full sequence is Proton-coupled zinc antiporter SLC30A8 (369 aa).

Over 1–79 the chain is Cytoplasmic; the sequence is MEFLERTYLV…AKWKLCSASA (79 aa). A disordered region spans residues 31-52; sequence PVNKDQCPRERPEELESGGMYH. Residues 32–44 are compositionally biased toward basic and acidic residues; it reads VNKDQCPRERPEE. His52, Cys53, and His54 together coordinate Zn(2+). The HCH Motif; seals regulatory zinc-binding pocket motif lies at 52-54; the sequence is HCH. A helical membrane pass occupies residues 80-100; sequence ICFIFMIAEVVGGHIAGSLAV. Over 101-103 the chain is Lumenal, vesicle; sequence VTD. The chain crosses the membrane as a helical span at residues 104-124; that stretch reads AAHLLIDLTSFLLSLFSLWLS. Zn(2+)-binding residues include His106, Asp110, and His137. The Cytoplasmic portion of the chain corresponds to 125–140; that stretch reads SKPPSKRLTFGWHRAE. The helical transmembrane segment at 141–161 threads the bilayer; sequence ILGALLSILCIWVVTGVLVYL. Residues 162–175 lie on the Lumenal, vesicle side of the membrane; it reads ACERLLYPDYQIQA. The chain crosses the membrane as a helical span at residues 176–196; that stretch reads TVMIIVSSCAVAANIVLTVVL. The Cytoplasmic portion of the chain corresponds to 197 to 217; the sequence is HQRCLGHNHKEVQANASVRAA. A helical transmembrane segment spans residues 218–238; the sequence is FVHALGDLFQSISVLISALII. Positions 220 and 224 each coordinate Zn(2+). Topologically, residues 239 to 245 are lumenal, vesicle; that stretch reads YFKPEYK. A helical membrane pass occupies residues 246-266; that stretch reads IADPICTFIFSILVLASTITI. Topologically, residues 267–369 are cytoplasmic; sequence LKDFSILLME…DCLFCEDPCD (103 aa). Residues His301, His318, His345, Glu352, Cys361, and Cys364 each coordinate Zn(2+).

It belongs to the cation diffusion facilitator (CDF) transporter (TC 2.A.4) family. SLC30A subfamily. As to quaternary structure, homodimer. As to expression, in the endocrine pancreas, expressed in insulin-producing beta cells. Expressed at relatively high levels in subcutaneous fat tissue from lean persons; much lower levels in visceral fat, whether from lean or obese individuals, and in subcutaneous fat tissue from obese individuals. Expressed in peripheral blood mononuclear cells, including T-cells and B-cells, with great variation among individuals ranging from negative to strongly positive.

The protein localises to the cytoplasmic vesicle. The protein resides in the secretory vesicle membrane. Its subcellular location is the cell membrane. The catalysed reaction is Zn(2+)(in) + 2 H(+)(out) = Zn(2+)(out) + 2 H(+)(in). Its function is as follows. Proton-coupled zinc ion antiporter mediating the entry of zinc into the lumen of pancreatic beta cell secretory granules, thereby regulating insulin secretion. This Homo sapiens (Human) protein is Proton-coupled zinc antiporter SLC30A8.